A 372-amino-acid polypeptide reads, in one-letter code: Tomoregulin-1 (372 aa).

A signal peptide spans 1–36 (MGAQAPLRLPAAPPLAVCGYTSVLLLFAFCLPGSRA). Topologically, residues 37-322 (SNQPAGGGGD…VPSRQKLTHV (286 aa)) are extracellular. N-linked (GlcNAc...) asparagine glycosylation occurs at N55. The region spanning 90-137 (ACQFQCHTNYIPVCGSNGDTYQNECFLRRAACKHQKDITVVARGPCYS) is the Kazal-like 1 domain. Intrachain disulfides connect C91/C121, C95/C114, and C103/C135. An N-linked (GlcNAc...) asparagine glycan is attached at N139. The disordered stretch occupies residues 139-161 (NGSGSGEGEEEGSGAGAHRKHSK). In terms of domain architecture, Kazal-like 2 spans 181-229 (VCNIDCSGYSFNPVCASDGSSYNNPCFVREASCIKQEQIDIRHLGHCTD). Disulfide bonds link C182/C213, C186/C206, C195/C227, C267/C280, C275/C291, and C293/C302. The EGF-like domain occupies 263 to 303 (SHMPCPENLNGYCIHGKCEFIYSTQKASCRCESGYTGQHCE). The chain crosses the membrane as a helical span at residues 323–343 (LIAAIIGAVQIAIIVAIVMCI). The Cytoplasmic portion of the chain corresponds to 344-372 (TRKCPKNNRGRRQKQNLGHFTSDTSSRMV). A disordered region spans residues 351 to 372 (NRGRRQKQNLGHFTSDTSSRMV). The segment covering 358–372 (QNLGHFTSDTSSRMV) has biased composition (polar residues).

This sequence belongs to the tomoregulin family. May interact with ST14. Maily expressed in neurons. Expressed in brain, neurointermediate lobe, pars distalis, pancreas, ovary and testis.

The protein localises to the cell membrane. Functionally, neuron-specific restriction factor that prevents herpes simplex virus 1 (HHV-1) infection in the brain by blocking viral entry. Also able to restrict herpes simplex virus 2 (HHV-2) infection, although to a lesser extent. Acts by preventing the association between the viral glycoprotein D (gD) and its cell surface receptor NECTIN1, thereby inhibiting fusion of the virus and the cell membrane. Also able to prevent the association between the viral glycoprotein B (gB) and MYH9/NMMHC-IIA and MYH10/NMMHC-IIB receptors. The chain is Tomoregulin-1 from Mus musculus (Mouse).